The chain runs to 652 residues: Phosphomethylpyrimidine synthase (652 aa).

Substrate-binding positions include N257, M286, Y315, H351, 371-373 (SRG), 412-415 (DGLR), and E451. A Zn(2+)-binding site is contributed by H455. Y478 provides a ligand contact to substrate. Position 519 (H519) interacts with Zn(2+). C599, C602, and C607 together coordinate [4Fe-4S] cluster.

This sequence belongs to the ThiC family. As to quaternary structure, homodimer. [4Fe-4S] cluster serves as cofactor.

The enzyme catalyses 5-amino-1-(5-phospho-beta-D-ribosyl)imidazole + S-adenosyl-L-methionine = 4-amino-2-methyl-5-(phosphooxymethyl)pyrimidine + CO + 5'-deoxyadenosine + formate + L-methionine + 3 H(+). The protein operates within cofactor biosynthesis; thiamine diphosphate biosynthesis. Its function is as follows. Catalyzes the synthesis of the hydroxymethylpyrimidine phosphate (HMP-P) moiety of thiamine from aminoimidazole ribotide (AIR) in a radical S-adenosyl-L-methionine (SAM)-dependent reaction. This is Phosphomethylpyrimidine synthase from Thiobacillus denitrificans (strain ATCC 25259 / T1).